A 198-amino-acid chain; its full sequence is Nucleoid occlusion factor SlmA (198 aa).

The region spanning 9–70 is the HTH tetR-type domain; that stretch reads RNRREEILQA…SLIEFIEDSL (62 aa). Positions 33–52 form a DNA-binding region, H-T-H motif; it reads TTAKLAANVGVSEAALYRHF. Residues 119–144 are a coiled coil; it reads DRLQGRINQLFERIEMQLRQVLREKK.

This sequence belongs to the nucleoid occlusion factor SlmA family. Homodimer. Interacts with FtsZ.

The protein localises to the cytoplasm. It is found in the nucleoid. In terms of biological role, required for nucleoid occlusion (NO) phenomenon, which prevents Z-ring formation and cell division over the nucleoid. Acts as a DNA-associated cell division inhibitor that binds simultaneously chromosomal DNA and FtsZ, and disrupts the assembly of FtsZ polymers. SlmA-DNA-binding sequences (SBS) are dispersed on non-Ter regions of the chromosome, preventing FtsZ polymerization at these regions. The protein is Nucleoid occlusion factor SlmA of Yersinia pseudotuberculosis serotype I (strain IP32953).